A 140-amino-acid polypeptide reads, in one-letter code: Sex-regulated protein janus-B (140 aa).

Substrate is bound at residue arginine 42. The active-site Proton acceptor is the histidine 69. A substrate-binding site is contributed by 110 to 112; it reads SRT.

The protein belongs to the janus family.

JanA and janB regulate somatic sex differentiation. The protein is Sex-regulated protein janus-B (janB) of Drosophila orena (Fruit fly).